The sequence spans 369 residues: Isocitrate dehydrogenase [NAD] subunit 2, mitochondrial (369 aa).

The transit peptide at 1–15 (MLRNTFFRNTSRRFL) directs the protein to the mitochondrion. The residue at position 105 (threonine 105) is a Phosphothreonine. Arginine 119, arginine 129, and arginine 150 together coordinate substrate. Threonine 153 is subject to Phosphothreonine. Position 237 (aspartate 237) interacts with substrate. Mg(2+) is bound by residues aspartate 237, aspartate 263, and aspartate 267. Phosphothreonine is present on residues threonine 327 and threonine 349.

This sequence belongs to the isocitrate and isopropylmalate dehydrogenases family. Octamer of two non-identical subunits IDH1 and IDH2. Mg(2+) is required as a cofactor. It depends on Mn(2+) as a cofactor.

The protein localises to the mitochondrion matrix. It carries out the reaction D-threo-isocitrate + NAD(+) = 2-oxoglutarate + CO2 + NADH. With respect to regulation, allosterically regulated by several compounds including AMP, NAD(+), and citrate. Its function is as follows. Performs an essential role in the oxidative function of the citric acid cycle. Also binds RNA; specifically to the 5'-untranslated leaders of mitochondrial mRNAs. The polypeptide is Isocitrate dehydrogenase [NAD] subunit 2, mitochondrial (IDH2) (Saccharomyces cerevisiae (strain ATCC 204508 / S288c) (Baker's yeast)).